The following is a 4625-amino-acid chain: Dynein-1-alpha heavy chain, flagellar inner arm I1 complex (4625 aa).

The tract at residues 1 to 1919 is stem; sequence MDRRLEWVKE…LIRQCTGLFK (1919 aa). Residues 70 to 84 show a composition bias toward acidic residues; the sequence is EQAPEAEDGEGEEHD. The tract at residues 70–163 is disordered; it reads EQAPEAEDGE…DEPPAPPAPK (94 aa). The segment covering 111 to 140 has biased composition (low complexity); sequence EDAPAAAAEANGANPEDEAAAPADGAADGA. The span at 144 to 155 shows a compositional bias: acidic residues; that stretch reads GGEEGDGAEGDE. 960–967 is an ATP binding site; sequence AGTNSGKS. 2 coiled-coil regions span residues 1227-1259 and 1339-1409; these read EELK…RYRT and TVEL…AVRQ. AAA stretches follow at residues 1920–2141, 2201–2437, 2550–2800, and 2906–3155; these read YGYE…VLVM, DVVE…RRPK, EPPA…IYEG, and NFYN…LRRY. ATP is bound by residues 1958–1965, 2242–2249, 2588–2595, and 2945–2952; these read GPAGTGKT, GQTGGGKT, GESGTAKS, and GVGGSGKQ. 2 coiled-coil regions span residues 3192–3297 and 3400–3494; these read LEKL…IRSY and KRKK…LIGD. The tract at residues 3192 to 3494 is stalk; the sequence is LEKLIQAAVE…ESRRDRLIGD (303 aa). AAA stretches follow at residues 3542–3773 and 3998–4216; these read LTSD…EIAE and ITRF…LIST. Residue 3680–3687 coordinates ATP; that stretch reads GPEISGKT. Residues 3701-3788 adopt a coiled-coil conformation; that stretch reads EQLLNVTLRH…KVTAAEIEET (88 aa).

Belongs to the dynein heavy chain family. In terms of assembly, the I1 inner arm complex (also known as the f dynein complex) is a two-headed isoform composed of two heavy chains (1-alpha and 1-beta), three intermediate chains and three light chains. I1 occupies a specific position proximal to the first radial spoke and repeats every 96 nm along the length of the axoneme.

It is found in the cell projection. The protein localises to the cilium. It localises to the flagellum. Its subcellular location is the cytoplasm. The protein resides in the cytoskeleton. It is found in the flagellum axoneme. Functionally, force generating protein of eukaryotic cilia and flagella. Produces force towards the minus ends of microtubules. Dynein has ATPase activity; the force-producing power stroke is thought to occur on release of ADP. Required for assembly of the I1 inner arm complex and its targeting to the appropriate axoneme location. Also required for phototaxis. This Chlamydomonas reinhardtii (Chlamydomonas smithii) protein is Dynein-1-alpha heavy chain, flagellar inner arm I1 complex (DHC1).